The sequence spans 669 residues: Acetolactate synthase, mitochondrial (669 aa).

A mitochondrion-targeting transit peptide spans 1-140 (MTVLAPLRRL…PRHEQAAGHA (140 aa)). Glutamate 134 lines the thiamine diphosphate pocket. Residues arginine 236, 351 to 372 (HGSGYANMAMQEADLILALGVR), and 403 to 422 (DISPKNIGKVVQPTEAIEGD) each bind FAD. Residues 497 to 577 (AHQMWAATFY…VKILILNNEE (81 aa)) form a thiamine pyrophosphate binding region. Aspartate 548 and asparagine 575 together coordinate Mg(2+).

The protein belongs to the TPP enzyme family. Requires Mg(2+) as cofactor. It depends on thiamine diphosphate as a cofactor.

The protein localises to the mitochondrion. The catalysed reaction is 2 pyruvate + H(+) = (2S)-2-acetolactate + CO2. The protein operates within amino-acid biosynthesis; L-isoleucine biosynthesis; L-isoleucine from 2-oxobutanoate: step 1/4. Its pathway is amino-acid biosynthesis; L-valine biosynthesis; L-valine from pyruvate: step 1/4. This Schizosaccharomyces pombe (strain 972 / ATCC 24843) (Fission yeast) protein is Acetolactate synthase, mitochondrial (ilv1).